We begin with the raw amino-acid sequence, 502 residues long: Facilitated trehalose transporter Tret1 (502 aa).

The Cytoplasmic portion of the chain corresponds to 1 to 38; that stretch reads MGVENTKQTMSSQNIKPAKDSDDVLHTQFKEVKRSPMR. The chain crosses the membrane as a helical span at residues 39–59; the sequence is YTMQLLAALAVSMASLMIGYS. Over 60–83 the chain is Extracellular; that stretch reads SSYTSPALVSMRDNTTATFEVTMD. An N-linked (GlcNAc...) asparagine glycan is attached at N73. Residues 84-104 form a helical membrane-spanning segment; the sequence is MAMWIGSIMPLSALIGGIIGG. The Cytoplasmic segment spans residues 105 to 120; that stretch reads PCIEYIGRRNTILSTA. A helical transmembrane segment spans residues 121-141; sequence LPFLAGWLFIALATNVAMILV. The Extracellular segment spans residues 142–144; that stretch reads GRS. A helical transmembrane segment spans residues 145–165; sequence ICGFCVGVASLSLPVYLGESI. Residues 166–172 lie on the Cytoplasmic side of the membrane; it reads QPEVRGS. The helical transmembrane segment at 173–193 threads the bilayer; sequence LGLLPTVFGNSGILMCFTAGM. Residues 194–199 are Extracellular-facing; that stretch reads YLAWRN. The chain crosses the membrane as a helical span at residues 200–220; sequence LALLGACIPIIFLILMFLIPE. The Cytoplasmic segment spans residues 221-282; it reads TPRWYISKGK…ELFRKNHIKP (62 aa). Residues 283-303 form a helical membrane-spanning segment; it reads VFISLGLMFFQQFSGINAVIF. Residues 304-319 are Extracellular-facing; that stretch reads YTVQIFKDSGSTVDEN. N-linked (GlcNAc...) asparagine glycosylation occurs at N319. A helical membrane pass occupies residues 320–340; the sequence is LSTIIVGLVNFISTFVAAMII. The Cytoplasmic segment spans residues 341-346; it reads DRLGRK. The helical transmembrane segment at 347 to 367 threads the bilayer; that stretch reads MLLYISSILMCITLFTFGTFF. At 368–376 the chain is on the extracellular side; sequence YVKELMDVT. Residues 377–397 form a helical membrane-spanning segment; it reads AFGWIPLMSLIVYVIGFSFGF. Topologically, residues 398-410 are cytoplasmic; the sequence is GPIPWLMMGEILP. The helical transmembrane segment at 411 to 433 threads the bilayer; sequence VKIRGTAASVATAFNWSCTFVVT. Topologically, residues 434 to 446 are extracellular; the sequence is KTYEDLVLHIGPY. A helical membrane pass occupies residues 447–467; it reads GTFWLFGTLVAVAFIFVIICV. Residues 468–502 lie on the Cytoplasmic side of the membrane; it reads PETRGRSLEEIERRFAGPVRRTSAIANLKPMPITI.

Belongs to the major facilitator superfamily. Sugar transporter (TC 2.A.1.1) family. Trehalose transporter subfamily.

The protein localises to the cell membrane. Moderate-capacity facilitative transporter for trehalose. Does not transport maltose, sucrose or lactose. Mediates the bidirectional transfer of trehalose. Responsible for the transport of trehalose synthesized in the fat body and the incorporation of trehalose into other tissues that require a carbon source, thereby regulating trehalose levels in the hemolymph. The polypeptide is Facilitated trehalose transporter Tret1 (Apis mellifera ligustica (Common honeybee)).